The sequence spans 382 residues: Neuropeptide Y receptor type 1 (382 aa).

Topologically, residues 1-33 (MNSTSFSQVENHSIFCNFSENSQFLAFESDDCH) are extracellular. N-linked (GlcNAc...) asparagine glycans are attached at residues N2, N11, and N17. The chain crosses the membrane as a helical span at residues 34-54 (LPLAMIFTLALAYGAVIILGV). Residues 55–75 (TGNLALIMIILKQKEMRNVTN) are Cytoplasmic-facing. A helical membrane pass occupies residues 76 to 96 (ILIVNLSFSDLLVAIMCLPFT). The Extracellular portion of the chain corresponds to 97–115 (FVYTLMDHWVFGEAMCKLN). A disulfide bridge links C112 with C197. Residues 116–136 (PFVQCVSITVSIFSLVLIAVE) traverse the membrane as a helical segment. At 137 to 153 (RHQLIINPRGWRPNNRH) the chain is on the cytoplasmic side. Residues 154–174 (AYVGIAVIWVLAVVSSLPFLI) form a helical membrane-spanning segment. At 175–210 (YQVLTDEPFQNVTLDAFKDKYVCFDKFPSDSHRLSY) the chain is on the extracellular side. A glycan (N-linked (GlcNAc...) asparagine) is linked at N185. A helical membrane pass occupies residues 211–231 (TTLLLMLQYFGPLCFIFICYF). Topologically, residues 232–259 (KIYIRLKRRNNMMDKMRDNKYRSSETKR) are cytoplasmic. A helical membrane pass occupies residues 260-280 (INIMLLSIVVAFAVCWLPLTI). Residues 281 to 298 (FNTVFDWNHQIIATCNHN) are Extracellular-facing. Residues 299-319 (LLFLLCHLTAMISTCVNPIFY) form a helical membrane-spanning segment. Residues 320-382 (GFLNKNFQRD…KINNDDNEKI (63 aa)) lie on the Cytoplasmic side of the membrane. A lipid anchor (S-palmitoyl cysteine) is attached at C337. Position 367 is a phosphoserine (S367).

The protein belongs to the G-protein coupled receptor 1 family.

The protein localises to the cell membrane. Its function is as follows. Receptor for neuropeptide Y and peptide YY. The chain is Neuropeptide Y receptor type 1 (NPY1R) from Canis lupus familiaris (Dog).